We begin with the raw amino-acid sequence, 208 residues long: A-type ATP synthase subunit E (208 aa).

It belongs to the V-ATPase E subunit family. In terms of assembly, has multiple subunits with at least A(3), B(3), C, D, E, F, H, I and proteolipid K(x).

The protein localises to the cell membrane. Functionally, component of the A-type ATP synthase that produces ATP from ADP in the presence of a proton gradient across the membrane. The protein is A-type ATP synthase subunit E of Ignicoccus hospitalis (strain KIN4/I / DSM 18386 / JCM 14125).